A 593-amino-acid chain; its full sequence is NADH-quinone oxidoreductase subunit C/D (593 aa).

Positions 1–184 (MTADNALYIP…DPYSLTLAKQ (184 aa)) are NADH dehydrogenase I subunit C. Residues 208–593 (DYMFLNLGPN…IDFVMADVDR (386 aa)) are NADH dehydrogenase I subunit D.

In the N-terminal section; belongs to the complex I 30 kDa subunit family. It in the C-terminal section; belongs to the complex I 49 kDa subunit family. In terms of assembly, NDH-1 is composed of 13 different subunits. Subunits NuoB, CD, E, F, and G constitute the peripheral sector of the complex.

It is found in the cell inner membrane. The catalysed reaction is a quinone + NADH + 5 H(+)(in) = a quinol + NAD(+) + 4 H(+)(out). Functionally, NDH-1 shuttles electrons from NADH, via FMN and iron-sulfur (Fe-S) centers, to quinones in the respiratory chain. The immediate electron acceptor for the enzyme in this species is believed to be ubiquinone. Couples the redox reaction to proton translocation (for every two electrons transferred, four hydrogen ions are translocated across the cytoplasmic membrane), and thus conserves the redox energy in a proton gradient. The polypeptide is NADH-quinone oxidoreductase subunit C/D (Pseudomonas savastanoi pv. phaseolicola (strain 1448A / Race 6) (Pseudomonas syringae pv. phaseolicola (strain 1448A / Race 6))).